Reading from the N-terminus, the 606-residue chain is DNA mismatch repair protein MutL (606 aa).

A disordered region spans residues 348–378; that stretch reads QPHAQRPQAPWSAETSPFRPYPPAAGFSERP.

Belongs to the DNA mismatch repair MutL/HexB family.

Functionally, this protein is involved in the repair of mismatches in DNA. It is required for dam-dependent methyl-directed DNA mismatch repair. May act as a 'molecular matchmaker', a protein that promotes the formation of a stable complex between two or more DNA-binding proteins in an ATP-dependent manner without itself being part of a final effector complex. In Rhizobium etli (strain CIAT 652), this protein is DNA mismatch repair protein MutL.